We begin with the raw amino-acid sequence, 659 residues long: Biosynthetic arginine decarboxylase 2 (659 aa).

The residue at position 119 (lysine 119) is an N6-(pyridoxal phosphate)lysine. Substrate is bound at residue 311 to 321 (LNVGGGLAVDY).

The protein belongs to the Orn/Lys/Arg decarboxylase class-II family. SpeA subfamily. The cofactor is Mg(2+). Pyridoxal 5'-phosphate serves as cofactor.

It catalyses the reaction L-arginine + H(+) = agmatine + CO2. Functionally, catalyzes the biosynthesis of agmatine from arginine. This Synechocystis sp. (strain ATCC 27184 / PCC 6803 / Kazusa) protein is Biosynthetic arginine decarboxylase 2 (speA2).